A 328-amino-acid chain; its full sequence is Nucleotide-binding protein BL0705 (328 aa).

A disordered region spans residues 1–35 (MNQQTTNRDTGEAAATNAPANSATSTSTPDNQPTP). Over residues 13-29 (AAATNAPANSATSTSTP) the composition is skewed to low complexity. Residue 46–53 (GMSGAGRS) participates in ATP binding. 101-104 (DVRS) provides a ligand contact to GTP.

It belongs to the RapZ-like family.

Displays ATPase and GTPase activities. The protein is Nucleotide-binding protein BL0705 of Bifidobacterium longum (strain NCC 2705).